We begin with the raw amino-acid sequence, 247 residues long: Pyrroloquinoline-quinone synthase (247 aa).

This sequence belongs to the PqqC family.

The catalysed reaction is 6-(2-amino-2-carboxyethyl)-7,8-dioxo-1,2,3,4,7,8-hexahydroquinoline-2,4-dicarboxylate + 3 O2 = pyrroloquinoline quinone + 2 H2O2 + 2 H2O + H(+). Its pathway is cofactor biosynthesis; pyrroloquinoline quinone biosynthesis. Its function is as follows. Ring cyclization and eight-electron oxidation of 3a-(2-amino-2-carboxyethyl)-4,5-dioxo-4,5,6,7,8,9-hexahydroquinoline-7,9-dicarboxylic-acid to PQQ. The sequence is that of Pyrroloquinoline-quinone synthase from Rhizobium rhizogenes (strain K84 / ATCC BAA-868) (Agrobacterium radiobacter).